A 689-amino-acid chain; its full sequence is MQAQGSQSNVGSLRSNCSDNSLPNNHVMMHCDESSGSPHSEHNDYSYEKTNLESTASNSREHRDNQLSRLKSEEYVVPKNQRRGLLPQLAIIPEFKDARDYPPMMKKMIVFLIAFSSMMGPMGTSIIFPAINSITTEFKTSVIMVNVSIGVYLLSLGVFPLWWSSLSELEGRRTTYITSFALLFAFNIGSALAPDINSFIALRMLCGAASASVQSVGAGTVADLYISEDRGKNLSYYYLGPLLAPLLSPIFGSLLVNRWPWRSTQWFMVILSGCNVILLTVLLPETLRKQDSKGAIAQILAERRIQVDNNERGEIQEDYQRGEDETDRIENQVATLSTEKHNYVGEVRDQDSLDLESHSSPNTYDGRAGETQLQRIYTEASRSLYEYQLDDSGIDATTAQVTRIRSTDPKLARSIRENSLRKLQTNLEEQVKKVLSSNGGEIAPKQVSAVRKVWDTFFVYFIKPLKSLHFLEYPPVALAITFSAISFSTVYFVNMTVEYKYSRPPYNFKPLYIGLLYIPNSVTYFFASIYGGRWVDMLLKRYKEKYGILAPEARISWNVVTSVISFPIALLIFGWCLDKKCHWVTPLIGTALFGYAAMMTIGATLSYLVDSLPGKGATGVALNNLIRQILAATAVFVTTPMLNGMGTGWAFTMLAFIVLGASSVLIILKKHGDYWRENYDLQKLYDKID.

Polar residues predominate over residues 1-24 (MQAQGSQSNVGSLRSNCSDNSLPN). The interval 1-73 (MQAQGSQSNV…DNQLSRLKSE (73 aa)) is disordered. Topologically, residues 1 to 108 (MQAQGSQSNV…RDYPPMMKKM (108 aa)) are extracellular. Basic and acidic residues-rich tracts occupy residues 29–51 (MHCD…EKTN) and 59–73 (SREH…LKSE). A helical membrane pass occupies residues 109 to 131 (IVFLIAFSSMMGPMGTSIIFPAI). Residues 132–139 (NSITTEFK) are Cytoplasmic-facing. The helical transmembrane segment at 140-163 (TSVIMVNVSIGVYLLSLGVFPLWW) threads the bilayer. Residues 164–175 (SSLSELEGRRTT) are Extracellular-facing. A helical transmembrane segment spans residues 176–193 (YITSFALLFAFNIGSALA). Over 194–235 (PDINSFIALRMLCGAASASVQSVGAGTVADLYISEDRGKNLS) the chain is Cytoplasmic. A helical transmembrane segment spans residues 236–256 (YYYLGPLLAPLLSPIFGSLLV). Residues 257–265 (NRWPWRSTQ) lie on the Extracellular side of the membrane. The helical transmembrane segment at 266-283 (WFMVILSGCNVILLTVLL) threads the bilayer. Topologically, residues 284 to 475 (PETLRKQDSK…KSLHFLEYPP (192 aa)) are cytoplasmic. S436 is modified (phosphoserine). The helical transmembrane segment at 476–493 (VALAITFSAISFSTVYFV) threads the bilayer. Topologically, residues 494–510 (NMTVEYKYSRPPYNFKP) are extracellular. Residues 511–532 (LYIGLLYIPNSVTYFFASIYGG) form a helical membrane-spanning segment. The Cytoplasmic segment spans residues 533–558 (RWVDMLLKRYKEKYGILAPEARISWN). Residues 559-577 (VVTSVISFPIALLIFGWCL) form a helical membrane-spanning segment. Topologically, residues 578 to 586 (DKKCHWVTP) are extracellular. Residues 587-609 (LIGTALFGYAAMMTIGATLSYLV) traverse the membrane as a helical segment. Topologically, residues 610-624 (DSLPGKGATGVALNN) are cytoplasmic. A helical membrane pass occupies residues 625-642 (LIRQILAATAVFVTTPML). Residues 643–648 (NGMGTG) lie on the Extracellular side of the membrane. A helical membrane pass occupies residues 649-668 (WAFTMLAFIVLGASSVLIIL). Residues 669 to 689 (KKHGDYWRENYDLQKLYDKID) lie on the Cytoplasmic side of the membrane.

Belongs to the major facilitator superfamily. CAR1 family.

It localises to the cell membrane. Multidrug resistance transporter involved in resistance and adaptation to quinidine and to the herbicide barban (4-chloro-2-butynyl [3-chlorophenyl] carbamate). This Saccharomyces cerevisiae (strain ATCC 204508 / S288c) (Baker's yeast) protein is Quinidine resistance protein 3 (QDR3).